The sequence spans 317 residues: Ribonuclease Z (317 aa).

Residues histidine 63, histidine 65, aspartate 67, histidine 68, histidine 143, aspartate 213, and histidine 273 each coordinate Zn(2+). Aspartate 67 acts as the Proton acceptor in catalysis.

Belongs to the RNase Z family. Homodimer. The cofactor is Zn(2+).

The enzyme catalyses Endonucleolytic cleavage of RNA, removing extra 3' nucleotides from tRNA precursor, generating 3' termini of tRNAs. A 3'-hydroxy group is left at the tRNA terminus and a 5'-phosphoryl group is left at the trailer molecule.. Functionally, zinc phosphodiesterase, which displays some tRNA 3'-processing endonuclease activity. Probably involved in tRNA maturation, by removing a 3'-trailer from precursor tRNA. The chain is Ribonuclease Z from Methanocaldococcus jannaschii (strain ATCC 43067 / DSM 2661 / JAL-1 / JCM 10045 / NBRC 100440) (Methanococcus jannaschii).